The chain runs to 179 residues: Ribosome-recycling factor (179 aa).

Belongs to the RRF family.

The protein resides in the cytoplasm. Responsible for the release of ribosomes from messenger RNA at the termination of protein biosynthesis. May increase the efficiency of translation by recycling ribosomes from one round of translation to another. The sequence is that of Ribosome-recycling factor from Chlamydia muridarum (strain MoPn / Nigg).